We begin with the raw amino-acid sequence, 327 residues long: G-protein coupled receptor 55 (327 aa).

At 1–20 (MSQPERDNCSFDSVDKLTRT) the chain is on the extracellular side. Residue N8 is glycosylated (N-linked (GlcNAc...) asparagine). Residues 21-41 (LQLAVHIPTFLLGLVLNLLAI) form a helical membrane-spanning segment. Topologically, residues 42 to 57 (RGFSAFLKKRKLDYIA) are cytoplasmic. The chain crosses the membrane as a helical span at residues 58–78 (TSIYMINLAVFDLLLVLSLPF). Residues 79–93 (KMVLPQVESPLPSFC) are Extracellular-facing. Residues 94-114 (TLVECLYFISMYGSVFTICFI) form a helical membrane-spanning segment. Topologically, residues 115 to 136 (SLDRFLAIQYPILASHLRSPRK) are cytoplasmic. A helical transmembrane segment spans residues 137–157 (TFGICCIIWMLVWIGSIPIYT). Over 158–179 (FHREVERYKCFHNMSDVTWSAS) the chain is Extracellular. N170 carries an N-linked (GlcNAc...) asparagine glycan. Residues 180-200 (VFFPLEIFGFLLPMGIMGFCS) form a helical membrane-spanning segment. At 201–239 (YRSIHILLRRPDSTEDWVQQRDTKGWVQKRACIWTIATN) the chain is on the cytoplasmic side. A helical membrane pass occupies residues 240-260 (LVIFVVSFLPVHLGFFLQYLV). Residues 261 to 279 (RNRFILDCRMKQGISLFLQ) are Extracellular-facing. A helical membrane pass occupies residues 280–300 (LSLCFSNINCCLDVFCYYFVI). Over 301–327 (KEFRMRIKAHRPSTIKLVNQDTMVSRG) the chain is Cytoplasmic.

It belongs to the G-protein coupled receptor 1 family. In terms of tissue distribution, highly expressed in splenic plasma cells.

It localises to the cell membrane. In terms of biological role, G-protein coupled receptor that binds to several ligands including 2-arachidonoyl lysophosphatidylinositol or lysophosphatidylglucoside with high affinity, leading to rapid and transient activation of numerous intracellular signaling pathways. Induces the Ca(2+) release from intracellular stores via ERK, the heterotrimeric G protein GNA13 and RHOA leading to morphological changes including cell rounding and stress fiber formation. In macrophages, acts downstream of lysophosphatidylglucoside to inhibit the translocation of the phospholipid-transporting ABCA1 to plasma membrane and subsequent cholesterol efflux leading to lipid accumulation and foam cell formation. May be involved in hyperalgesia associated with inflammatory and neuropathic pain. This Mus musculus (Mouse) protein is G-protein coupled receptor 55 (Gpr55).